Consider the following 245-residue polypeptide: MLKRREPDMFKRVLLKLSGEFLAGDNGFGISPETTAELARRIIGALDGTEVELAVVIGGGNLWRGARNGQGMDPATADYIGMLGTVMNAMALQDAMEAAGKPTRIMSAIHMQQVAEPYIRRRAMRHLEKGRVVIFGGGNGAPFFTTDTTSTLRALEIGADVVLMAKNAVDGVYDSDPRKNPDAKRYEQLTHMDVVEQRLEVMDATALTLCMDKGLPIVVFDIFEEGNLARLLRGERVGTLIQSRG.

An ATP-binding site is contributed by 16-19; that stretch reads KLSG. Positions 24–29 are involved in allosteric activation by GTP; sequence GDNGFG. A UMP-binding site is contributed by glycine 59. 2 residues coordinate ATP: glycine 60 and arginine 64. UMP contacts are provided by residues aspartate 78 and 139–146; that span reads NGAPFFTT. ATP-binding residues include asparagine 167, tyrosine 173, and aspartate 176.

It belongs to the UMP kinase family. Homohexamer.

The protein resides in the cytoplasm. It carries out the reaction UMP + ATP = UDP + ADP. It participates in pyrimidine metabolism; CTP biosynthesis via de novo pathway; UDP from UMP (UMPK route): step 1/1. With respect to regulation, allosterically activated by GTP. Inhibited by UTP. Catalyzes the reversible phosphorylation of UMP to UDP. In Deinococcus radiodurans (strain ATCC 13939 / DSM 20539 / JCM 16871 / CCUG 27074 / LMG 4051 / NBRC 15346 / NCIMB 9279 / VKM B-1422 / R1), this protein is Uridylate kinase.